The sequence spans 188 residues: Probable nicotinate-nucleotide adenylyltransferase (188 aa).

The protein belongs to the NadD family.

The enzyme catalyses nicotinate beta-D-ribonucleotide + ATP + H(+) = deamido-NAD(+) + diphosphate. The protein operates within cofactor biosynthesis; NAD(+) biosynthesis; deamido-NAD(+) from nicotinate D-ribonucleotide: step 1/1. Catalyzes the reversible adenylation of nicotinate mononucleotide (NaMN) to nicotinic acid adenine dinucleotide (NaAD). This is Probable nicotinate-nucleotide adenylyltransferase from Listeria monocytogenes serotype 4b (strain F2365).